We begin with the raw amino-acid sequence, 213 residues long: Na(+)-translocating NADH-quinone reductase subunit D (213 aa).

The next 7 membrane-spanning stretches (helical) occupy residues 21-41 (ILIA…VQTA), 42-62 (ITMG…VSLL), 77-97 (IIIS…FFDI), 101-121 (LSVF…SESL), 131-151 (FLDG…IGVI), 153-173 (ELFG…VYAS), and 183-203 (LSLM…IWLV).

Belongs to the NqrDE/RnfAE family. Composed of six subunits; NqrA, NqrB, NqrC, NqrD, NqrE and NqrF.

The protein localises to the cell inner membrane. The catalysed reaction is a ubiquinone + n Na(+)(in) + NADH + H(+) = a ubiquinol + n Na(+)(out) + NAD(+). NQR complex catalyzes the reduction of ubiquinone-1 to ubiquinol by two successive reactions, coupled with the transport of Na(+) ions from the cytoplasm to the periplasm. NqrA to NqrE are probably involved in the second step, the conversion of ubisemiquinone to ubiquinol. This Chlamydia pneumoniae (Chlamydophila pneumoniae) protein is Na(+)-translocating NADH-quinone reductase subunit D.